The primary structure comprises 446 residues: Tol-Pal system protein TolB (446 aa).

The first 19 residues, 1-19, serve as a signal peptide directing secretion; the sequence is MLLRYLFILFIIIPIKAFA.

The protein belongs to the TolB family. As to quaternary structure, the Tol-Pal system is composed of five core proteins: the inner membrane proteins TolA, TolQ and TolR, the periplasmic protein TolB and the outer membrane protein Pal. They form a network linking the inner and outer membranes and the peptidoglycan layer.

The protein localises to the periplasm. Part of the Tol-Pal system, which plays a role in outer membrane invagination during cell division and is important for maintaining outer membrane integrity. This Pelagibacter ubique (strain HTCC1062) protein is Tol-Pal system protein TolB.